Here is a 507-residue protein sequence, read N- to C-terminus: Histone-lysine N-methyltransferase set-18 (507 aa).

Residues Cys49, Cys52, Cys65, Cys68, Cys74, Cys78, His86, and Cys90 each coordinate Zn(2+). The MYND-type zinc finger occupies 49-90 (CANCLRGPAPGEKLLRCGGCNFSMYCSKECQATAWLVHKPEC).

Belongs to the class V-like SAM-binding methyltransferase superfamily. Histone-lysine methyltransferase family. Expressed in pharyngeal and body wall muscles.

The enzyme catalyses L-lysyl(36)-[histone H3] + 2 S-adenosyl-L-methionine = N(6),N(6)-dimethyl-L-lysyl(36)-[histone H3] + 2 S-adenosyl-L-homocysteine + 2 H(+). Functionally, histone methyltransferase. Specifically methylates 'Lys-36' of histone H3, inducing di-methylation. Plays a role in modulating lifespan and oxidative stress resistance, in a manner dependent upon daf-16/Forkhead box protein O and the Insulin/IGF-1-like signaling (IIS) mediated pathway. Represses transcription of daf-16 isoform a, perhaps by methylating histone H3 at the daf-16 promoter, which in turn leads to recruitment of histone deacetylases and thus modulation of expression. The chain is Histone-lysine N-methyltransferase set-18 from Caenorhabditis elegans.